The chain runs to 396 residues: Subtilisin-like protease 5 (396 aa).

The signal sequence occupies residues 1–20 (MTGFFTILSFSLAALSVTNA). A propeptide spanning residues 21–116 (AQILSVPKGA…VEPDAIISQH (96 aa)) is cleaved from the precursor. The 77-residue stretch at 37–113 (YIVVMKDDTS…VAFVEPDAII (77 aa)) folds into the Inhibitor I9 domain. A glycan (N-linked (GlcNAc...) asparagine) is linked at N63. The region spanning 125–396 (PWGLSRLSNR…TRLLYNGSGR (272 aa)) is the Peptidase S8 domain. Residues D156 and H187 each act as charge relay system in the active site. N230 and N248 each carry an N-linked (GlcNAc...) asparagine glycan. The Charge relay system role is filled by S342. Residues 377 to 389 (TIRNPGPDTTTRL) show a composition bias toward polar residues. Residues 377–396 (TIRNPGPDTTTRLLYNGSGR) are disordered. N-linked (GlcNAc...) asparagine glycosylation occurs at N392.

It belongs to the peptidase S8 family.

It is found in the secreted. Its function is as follows. Secreted subtilisin-like serine protease with keratinolytic activity that contributes to pathogenicity. The protein is Subtilisin-like protease 5 (SUB5) of Arthroderma benhamiae (Trichophyton mentagrophytes).